Reading from the N-terminus, the 405-residue chain is Indoleamine 2,3-dioxygenase 2 (405 aa).

His347 is a binding site for heme.

The protein belongs to the indoleamine 2,3-dioxygenase family. It depends on heme as a cofactor. Expressed mainly in antigen-presenting immune cells, liver, kidney, brain, and placenta. Highly expressed in kidney, followed by epididymis and liver (at protein level). Detected in the tails of the spermatozoa in the testis and in the kidney tubules (at protein level). Constitutively expressed in brain.

It catalyses the reaction L-tryptophan + O2 = N-formyl-L-kynurenine. It participates in amino-acid degradation; L-tryptophan degradation via kynurenine pathway; L-kynurenine from L-tryptophan: step 1/2. Activity is inhibited by D-1MT (1-methyl-D-tryptophan) and MTH-trp (methylthiohydantoin-DL-tryptophan) but not L-1MT (1-methyl-L-tryptophan). Its function is as follows. Catalyzes the first and rate-limiting step in the kynurenine pathway of tryptophan catabolism. Involved in immune regulation. The chain is Indoleamine 2,3-dioxygenase 2 from Mus musculus (Mouse).